Here is a 326-residue protein sequence, read N- to C-terminus: Phospho-N-acetylmuramoyl-pentapeptide-transferase (326 aa).

The next 9 helical transmembrane spans lie at 3 to 23 (ISISAGIVTFLLTLVGIPAFI), 51 to 71 (TMGGLVFLIAAVVVSFLVALF), 79 to 99 (VGMILFILVLYGLVGFLDDFL), 115 to 135 (LALQLLGGVIFYLFYERGGDM), 138 to 158 (VFGYQVHLGIFYIIFALFWLV), 169 to 189 (GIDGLASISVVISLSAYGVIA), 195 to 215 (MDILLVIFAMIGGLLGFFVFN), 221 to 243 (VFMGDVGSLALGGMLAAISMALH), and 306 to 326 (FFFWGVGLLASLLTFAILYLM).

The protein belongs to the glycosyltransferase 4 family. MraY subfamily. Mg(2+) is required as a cofactor.

The protein resides in the cell membrane. It carries out the reaction UDP-N-acetyl-alpha-D-muramoyl-L-alanyl-gamma-D-glutamyl-L-lysyl-D-alanyl-D-alanine + di-trans,octa-cis-undecaprenyl phosphate = Mur2Ac(oyl-L-Ala-gamma-D-Glu-L-Lys-D-Ala-D-Ala)-di-trans,octa-cis-undecaprenyl diphosphate + UMP. It functions in the pathway cell wall biogenesis; peptidoglycan biosynthesis. In terms of biological role, catalyzes the initial step of the lipid cycle reactions in the biosynthesis of the cell wall peptidoglycan: transfers peptidoglycan precursor phospho-MurNAc-pentapeptide from UDP-MurNAc-pentapeptide onto the lipid carrier undecaprenyl phosphate, yielding undecaprenyl-pyrophosphoryl-MurNAc-pentapeptide, known as lipid I. The protein is Phospho-N-acetylmuramoyl-pentapeptide-transferase of Streptococcus pneumoniae (strain Taiwan19F-14).